We begin with the raw amino-acid sequence, 361 residues long: Molybdenum import ATP-binding protein ModC (361 aa).

An ABC transporter domain is found at 1–235 (MDGLRLRFRR…VDLPLALDDD (235 aa)). 33–40 (GHSGSGKS) serves as a coordination point for ATP. The Mop domain maps to 296 to 361 (QSSILNRLPV…AQIKSVAVLA (66 aa)).

The protein belongs to the ABC transporter superfamily. Molybdate importer (TC 3.A.1.8) family. In terms of assembly, the complex is composed of two ATP-binding proteins (ModC), two transmembrane proteins (ModB) and a solute-binding protein (ModA).

It localises to the cell inner membrane. The enzyme catalyses molybdate(out) + ATP + H2O = molybdate(in) + ADP + phosphate + H(+). In terms of biological role, part of the ABC transporter complex ModABC involved in molybdenum import. Responsible for energy coupling to the transport system. The protein is Molybdenum import ATP-binding protein ModC of Pseudomonas aeruginosa (strain ATCC 15692 / DSM 22644 / CIP 104116 / JCM 14847 / LMG 12228 / 1C / PRS 101 / PAO1).